The chain runs to 687 residues: SLCO1B3-SLCO1B7 readthrough transcript protein (687 aa).

Topologically, residues 1–29 (MDQHQHLNKTAESASSEKKKTRRCNGFKM) are cytoplasmic. The helical transmembrane segment at 30–50 (FLAALSFSYIAKALGGIIMKI) threads the bilayer. At 51–63 (SITQIERRFDISS) the chain is on the extracellular side. Residues 64 to 84 (SLAGLIDGSFEIGNLLVIVFV) form a helical membrane-spanning segment. Topologically, residues 85 to 96 (SYFGSKLHRPKL) are cytoplasmic. Residues 97–117 (IGIGCLLMGTGSILTSLPHFF) form a helical membrane-spanning segment. The Extracellular portion of the chain corresponds to 118 to 170 (MGYYRYSKETNIDPSENSTSNLPNCLINQMLSLNRTPSEIIERGCVKESGSHM). Residues asparagine 134 and asparagine 151 are each glycosylated (N-linked (GlcNAc...) asparagine). A helical transmembrane segment spans residues 171–191 (WIYVFMGNMLRGIGETPIVPL). Topologically, residues 192–206 (GISYIDDFAKEGHSS) are cytoplasmic. Residues 207–227 (LYLGTVNVMGMTGLVFAFMLG) form a helical membrane-spanning segment. At 228–258 (SLFAKMYVDIGYVDLSTIRITPKDSRWVGAW) the chain is on the extracellular side. Residues 259 to 279 (WLGFLVSGIVSIISSIPFFFL) traverse the membrane as a helical segment. Residues 280–339 (PLNPNKPQKERKVSLFLHVLKTNDKRNQIANLTNRRKYITKNVTGFFQSLKSILTNPLYV) lie on the Cytoplasmic side of the membrane. The chain crosses the membrane as a helical span at residues 340–360 (IFVIFTLLHMSSYIASLTYII). Over 361–376 (KMVEQQYGWSASKTNF) the chain is Extracellular. Residues 377–397 (LLGVLALPAVAIGMFSGGYII) traverse the membrane as a helical segment. The Cytoplasmic segment spans residues 398–409 (KKFKLSLVGLAK). Residues 410–430 (LAFCSATVHLLSQVLYFFLIC) traverse the membrane as a helical segment. Over 431–539 (ESKSVAGLTL…CTRKSYVYFV (109 aa)) the chain is Extracellular. A Kazal-like domain is found at 453–508 (DVPLSYCNSECNCDESQWEPVCGNNGITYLSPCLAGCKSSSGNKEPIVFYNCSCVE). 3 disulfides stabilise this stretch: cysteine 459–cysteine 489, cysteine 465–cysteine 485, and cysteine 474–cysteine 506. 2 N-linked (GlcNAc...) asparagine glycosylation sites follow: asparagine 503 and asparagine 516. The chain crosses the membrane as a helical span at residues 540 to 560 (IQVLDAFLCAVGLTSYSVLVI). The Cytoplasmic segment spans residues 561 to 568 (RIVQPELK). The helical transmembrane segment at 569 to 589 (ALAIGFHSMIMRSLGGILVPI) threads the bilayer. Residues 590–624 (YFGALIDTTCMKWSTNSCGARGACRIYNSTYLGRA) lie on the Extracellular side of the membrane. Asparagine 617 is a glycosylation site (N-linked (GlcNAc...) asparagine). The chain crosses the membrane as a helical span at residues 625 to 645 (FFGLKVALIFPVLVLLTVFIF). Topologically, residues 646-687 (VVRKKSHGKDTKVLENERQVMDEANLEFLNDSEHFVPSAEEQ) are cytoplasmic.

This sequence belongs to the organo anion transporter (TC 2.A.60) family. In terms of tissue distribution, expressed in the perivenular areas (centrilobular) of the liver (at protein level).

It is found in the smooth endoplasmic reticulum membrane. The protein localises to the cell membrane. It localises to the endoplasmic reticulum membrane. The enzyme catalyses 17beta-estradiol 17-O-(beta-D-glucuronate)(out) = 17beta-estradiol 17-O-(beta-D-glucuronate)(in). It catalyses the reaction dehydroepiandrosterone 3-sulfate(out) = dehydroepiandrosterone 3-sulfate(in). It carries out the reaction taurocholate(out) = taurocholate(in). The catalysed reaction is lithocholate(out) = lithocholate(in). Its activity is regulated as follows. Transport activity is induced by farnesoid X receptor (FXR) agonists such as chenodeoxycholate. In terms of biological role, mediates the Na(+)-independent uptake of organic anions. Transports the conjugated steroids 17-beta-glucuronosyl estradiol (17beta-estradiol 17-O-(beta-D-glucuronate) or E2G) and dehydroepiandrosterone 3-sulfate (DHEAS) at the smooth endoplasmic reticulum membrane (SER), granting access to metabolizing enzymes. Contributes to the metabolism of bile acids such as taurocholate (cholyltaurine) and lithocholate, by functioning as a doorway between SER and cytosol, thereby decreasing their circulating levels and protecting the organism from their detergent properties. Regulates access or exit of drugs to the SER lumen. In Homo sapiens (Human), this protein is SLCO1B3-SLCO1B7 readthrough transcript protein.